We begin with the raw amino-acid sequence, 240 residues long: Ubiquinone biosynthesis O-methyltransferase (240 aa).

Arg-44, Gly-64, Asp-85, and Met-129 together coordinate S-adenosyl-L-methionine.

It belongs to the methyltransferase superfamily. UbiG/COQ3 family.

It carries out the reaction a 3-demethylubiquinol + S-adenosyl-L-methionine = a ubiquinol + S-adenosyl-L-homocysteine + H(+). It catalyses the reaction a 3-(all-trans-polyprenyl)benzene-1,2-diol + S-adenosyl-L-methionine = a 2-methoxy-6-(all-trans-polyprenyl)phenol + S-adenosyl-L-homocysteine + H(+). Its pathway is cofactor biosynthesis; ubiquinone biosynthesis. O-methyltransferase that catalyzes the 2 O-methylation steps in the ubiquinone biosynthetic pathway. The protein is Ubiquinone biosynthesis O-methyltransferase of Escherichia coli (strain ATCC 8739 / DSM 1576 / NBRC 3972 / NCIMB 8545 / WDCM 00012 / Crooks).